We begin with the raw amino-acid sequence, 113 residues long: Heavy metal-associated isoprenylated plant protein 15 (113 aa).

An HMA domain is found at Met-1 to Tyr-65. Residues Asp-69–Glu-89 are a coiled coil. Cys-110 carries the cysteine methyl ester modification. Cys-110 carries the S-farnesyl cysteine lipid modification. Residues Val-111–Cys-113 constitute a propeptide, removed in mature form.

Belongs to the HIPP family. In terms of tissue distribution, expressed in embryo sacs.

Probable heavy-metal-binding protein. The polypeptide is Heavy metal-associated isoprenylated plant protein 15 (Arabidopsis thaliana (Mouse-ear cress)).